The primary structure comprises 1239 residues: Potassium channel subfamily T member 1 (1239 aa).

The segment at 1 to 45 is disordered; it reads MARAKLPRSPSEGKAGPGDTPAGSAAPEEPHGLSPLLPTRGGGSV. Residues 1–93 are Cytoplasmic-facing; that stretch reads MARAKLPRSP…LFFIKNQRSS (93 aa). The chain crosses the membrane as a helical span at residues 94–126; it reads LRIRLFNFSLKLLTCLLYIVRVLLDNPDQGIGC. At 127 to 153 the chain is on the extracellular side; the sequence is WGCTKYNYTFNGSSSEFHWAPILWVER. Residues Asn133 and Asn137 are each glycosylated (N-linked (GlcNAc...) asparagine). A helical transmembrane segment spans residues 154–178; the sequence is KMALWVIQVIVATISFLETMLLIYL. Residues 179-192 are Cytoplasmic-facing; sequence SYKGNIWEQIFHVS. The helical transmembrane segment at 193 to 208 threads the bilayer; that stretch reads FVLEMINTLPFIITVF. Residues 209–215 lie on the Extracellular side of the membrane; sequence WPPLRNL. The chain crosses the membrane as a helical span at residues 216–233; sequence FIPVFLNCWLAKHALENM. At 234–246 the chain is on the cytoplasmic side; the sequence is INDFHRAILRTQS. Residues 247–274 traverse the membrane as a helical segment; sequence AMFNQVLILFCTLLCLVFTGTCGIQHLE. The Extracellular portion of the chain corresponds to 275 to 281; the sequence is RAGGNLN. The segment at residues 282–302 is an intramembrane region (pore-forming); that stretch reads LLTSFYFCIVTFSTVGFGDVT. Residues Val296 and Gly297 each contribute to the K(+) site. Topologically, residues 303 to 304 are extracellular; it reads PK. The chain crosses the membrane as a helical span at residues 305–338; sequence IWPSQLLVVILICVTLVVLPLQFEELVYLWMERQ. Over 339–1239 the chain is Cytoplasmic; sequence KSGGNYSRHR…NPETRDETQL (901 aa). In terms of domain architecture, RCK N-terminal 1 spans 352–488; the sequence is EKHVVLCVSS…FHVKFADHVV (137 aa). Leu513, His516, Ser538, and Asn540 together coordinate Na(+). The segment at 658–689 is disordered; that stretch reads QNTDCRPSQGGSGGGGGKLTLPTENGSGSRRP. Zn(2+) is bound by residues Cys758 and Cys759. 2 residues coordinate K(+): Arg761 and Lys764. 2 residues coordinate Na(+): Arg761 and Lys764. Cys766 and His768 together coordinate Zn(2+). Asn769, Tyr771, Tyr777, and Gly778 together coordinate K(+). Na(+) is bound at residue Tyr771. Phe779 serves as a coordination point for Na(+). The RCK N-terminal 2 domain maps to 781 to 921; that stretch reads NKLIIVSAET…QFRAKDSYSL (141 aa). K(+)-binding residues include Ser787, Leu818, Asp820, Gly842, and Asp865. Disordered regions lie at residues 1053 to 1081 and 1212 to 1239; these read REAK…ADPV and TSSS…ETQL. The span at 1213-1230 shows a compositional bias: low complexity; that stretch reads SSSQSRKSSCSNKLSSCN.

This sequence belongs to the potassium channel family. Calcium-activated (TC 1.A.1.3) subfamily. KCa4.1/KCNT1 sub-subfamily. Homotetramer; which constitutes the Na(+)-activated K(+) channel. Interacts with KCNT2; these heterodimer channels differ from the homomers in their unitary conductance, kinetic behavior, subcellular localization, and response to activation of protein kinase C. Interacts (via C-terminus) with FMR1; this interaction alters gating properties of KCNT1. Interacts with CRBN via its cytoplasmic C-terminus. In terms of assembly, does not interact with KCNT2. Phosphorylated by protein kinase C. Phosphorylation of the C-terminal domain increases channel activity. Detected in brain and brainstem, in vestibular and oculomotor nuclei, the medial nucleus of the trapezoid in the auditory system, in olfactory bulb, red nucleus, and deep cerebellar nuclei. Detected in thalamus, substantia nigra, and amygdala (at protein level). Highly expressed in the brain and kidney.

The protein localises to the cell membrane. The enzyme catalyses K(+)(in) = K(+)(out). Activated by high intracellular Na(+) level. In addition to activation by Na(+), is cooperatively activated by intracellular Cl(-) levels. Activated upon stimulation of G-protein coupled receptors, such as CHRM1 and GRIA1. In terms of biological role, sodium-activated K(+) channel. Acts as an important mediator of neuronal membrane excitability. Contributes to the delayed outward currents. Regulates neuronal bursting in sensory neurons. Contributes to synaptic development and plasticity. The chain is Potassium channel subfamily T member 1 (Kcnt1) from Rattus norvegicus (Rat).